Here is a 1906-residue protein sequence, read N- to C-terminus: Zinc metalloprotease ZmpB (1906 aa).

A signal peptide spans 1–33; sequence MFKKDRFSIRKIKGVVGSVFLGSLLMAPSVVDA. A propeptide spanning residues 34–76 is cleaved from the precursor; it reads ATYHYVNKEIISQEAKDLIQTGKPDRNEVVYGLVYQKDQLPQT. Positions 73–77 match the LPXTG sorting signal motif; that stretch reads LPQTG. At T76 the chain carries Pentaglycyl murein peptidoglycan amidated threonine. The next 2 membrane-spanning stretches (helical) occupy residues 77–98 and 105–127; these read GTEA…LLIY and SVFL…DPVA. Residues 128–1906 lie on the Extracellular side of the membrane; it reads TLALASREGV…TNSFKTSIFK (1779 aa). The tract at residues 178–436 is disordered; that stretch reads VETPQSITNQ…KASSVSPTDY (259 aa). Polar residues predominate over residues 181-196; the sequence is PQSITNQEQARTENQV. Basic and acidic residues-rich tracts occupy residues 201–239, 252–262, 271–335, 352–375, and 383–408; these read EAPK…KEDS, VESKPEEKVAV, KPAE…KEET, KQTE…REDE, and EPEK…DKIK. Tandem repeats lie at residues 277–291, 293–315, 361–375, and 380–402. The interval 277 to 375 is 2 X 15 AA repeats of K-V-E-Q-A-G-E-P-V-A-P-R-E-D-E; it reads KVEQAGEPVA…GEPVAPREDE (99 aa). Residues 293 to 375 form a 2 X 23 AA approximate repeats region; that stretch reads APVEPEKQPE…GEPVAPREDE (83 aa). Residues 421–436 show a composition bias toward polar residues; the sequence is LNNQIDKASSVSPTDY. Residue H1562 participates in Zn(2+) binding. Residue E1563 is part of the active site. Positions 1566 and 1586 each coordinate Zn(2+).

Belongs to the peptidase M26 family. Zn(2+) serves as cofactor. In terms of processing, the Gram-positive cell-wall anchor motif LPXTG is located in the N-terminal part, in contrast to such motifs in other known streptococcal and staphylococcal proteins. The protease could be cleaved by the sortase and anchored in the membrane via the two potential N-terminal transmembrane domains, whereas the propeptide located prior to the LPXTG motif would remain attached to the cell wall peptidoglycan by an amide bond.

The protein resides in the secreted. Its subcellular location is the cell wall. It localises to the membrane. In terms of biological role, is a virulence factor capable of inducing inflammation in the lower respiratory tract, by increasing tumor necrosis factor alpha (TNF-alpha) concentration in the lungs. Also appears to have other functions important in virulence in models of pneumonia and septicemia. The sequence is that of Zinc metalloprotease ZmpB (zmpB) from Streptococcus pneumoniae serotype 4 (strain ATCC BAA-334 / TIGR4).